We begin with the raw amino-acid sequence, 212 residues long: Ras-related protein Rab-2A (212 aa).

Positions 16, 17, 18, 19, 20, 21, and 38 each coordinate GTP. S20 contacts Mg(2+). The short motif at 37–42 (LTIGVE) is the Switch 1 element. Mg(2+) is bound by residues T38 and D61. The Switch 2 signature appears at 63–72 (AGQESFRSIT). GTP is bound by residues G64, N119, K120, D122, A150, and K151. Residues C211 and C212 are each lipidated (S-geranylgeranyl cysteine).

It belongs to the small GTPase superfamily. Rab family. Interacts with PRKCI. Interacts with TRIP11. Interacts (in GTP-bound form) with GARIN1B. It depends on Mg(2+) as a cofactor. Post-translationally, prenylated. Prenylation is required for association with cellular membranes.

It localises to the endoplasmic reticulum-Golgi intermediate compartment membrane. The protein resides in the melanosome. Its subcellular location is the endoplasmic reticulum membrane. It is found in the golgi apparatus membrane. The protein localises to the cytoplasmic vesicle. It localises to the secretory vesicle. The protein resides in the acrosome. The catalysed reaction is GTP + H2O = GDP + phosphate + H(+). Regulated by guanine nucleotide exchange factors (GEFs) which promote the exchange of bound GDP for free GTP, GTPase activating proteins (GAPs) which increase the GTP hydrolysis activity, and GDP dissociation inhibitors (GDIs) which inhibit the dissociation of the nucleotide from the GTPase. Its function is as follows. The small GTPases Rab are key regulators of intracellular membrane trafficking, from the formation of transport vesicles to their fusion with membranes. Rabs cycle between active GTP-bound and inactive GDP-bound states. In their active state, drive transport of vesicular carriers from donor organelles to acceptor organelles to regulate the membrane traffic that maintains organelle identity and morphology. RAB2A regulates autophagy by promoting autophagosome-lysosome fusion via recruitment of the HOPS endosomal tethering complex; this process involves autophagosomal RAB2A and lysosomal RAB39A recruitment of HOPS subcomplexes VPS39-VPS11 and VPS41-VPS16-VPS18-VPS33A, respectively, which assemble into a functional complex to mediate membrane tethering and SNAREs-driven membrane fusion. Required for protein transport from the endoplasmic reticulum to the Golgi complex. Regulates the compacted morphology of the Golgi. Together with RAB2B, redundantly required for efficient autophagic flux. The polypeptide is Ras-related protein Rab-2A (RAB2A) (Gallus gallus (Chicken)).